Reading from the N-terminus, the 154-residue chain is 6,7-dimethyl-8-ribityllumazine synthase (154 aa).

5-amino-6-(D-ribitylamino)uracil-binding positions include F22, 56 to 58, and 80 to 82; these read AFE and AVI. 85–86 contributes to the (2S)-2-hydroxy-3-oxobutyl phosphate binding site; the sequence is AT. H88 serves as the catalytic Proton donor. F113 provides a ligand contact to 5-amino-6-(D-ribitylamino)uracil. R127 lines the (2S)-2-hydroxy-3-oxobutyl phosphate pocket.

The protein belongs to the DMRL synthase family. Forms an icosahedral capsid composed of 60 subunits, arranged as a dodecamer of pentamers.

It catalyses the reaction (2S)-2-hydroxy-3-oxobutyl phosphate + 5-amino-6-(D-ribitylamino)uracil = 6,7-dimethyl-8-(1-D-ribityl)lumazine + phosphate + 2 H2O + H(+). The protein operates within cofactor biosynthesis; riboflavin biosynthesis; riboflavin from 2-hydroxy-3-oxobutyl phosphate and 5-amino-6-(D-ribitylamino)uracil: step 1/2. Functionally, catalyzes the formation of 6,7-dimethyl-8-ribityllumazine by condensation of 5-amino-6-(D-ribitylamino)uracil with 3,4-dihydroxy-2-butanone 4-phosphate. This is the penultimate step in the biosynthesis of riboflavin. The chain is 6,7-dimethyl-8-ribityllumazine synthase from Anoxybacillus flavithermus (strain DSM 21510 / WK1).